The chain runs to 304 residues: Bifunctional protein FolD (304 aa).

Residues 167–169 (GRS), Ser192, and Ile233 each bind NADP(+).

Belongs to the tetrahydrofolate dehydrogenase/cyclohydrolase family. In terms of assembly, homodimer.

The enzyme catalyses (6R)-5,10-methylene-5,6,7,8-tetrahydrofolate + NADP(+) = (6R)-5,10-methenyltetrahydrofolate + NADPH. The catalysed reaction is (6R)-5,10-methenyltetrahydrofolate + H2O = (6R)-10-formyltetrahydrofolate + H(+). The protein operates within one-carbon metabolism; tetrahydrofolate interconversion. Its function is as follows. Catalyzes the oxidation of 5,10-methylenetetrahydrofolate to 5,10-methenyltetrahydrofolate and then the hydrolysis of 5,10-methenyltetrahydrofolate to 10-formyltetrahydrofolate. The sequence is that of Bifunctional protein FolD from Rhodospirillum centenum (strain ATCC 51521 / SW).